Reading from the N-terminus, the 208-residue chain is FMN-dependent NADH:quinone oxidoreductase (208 aa).

FMN-binding positions include serine 9 and 15–17; that span reads SHS.

This sequence belongs to the azoreductase type 1 family. In terms of assembly, homodimer. FMN serves as cofactor.

It carries out the reaction 2 a quinone + NADH + H(+) = 2 a 1,4-benzosemiquinone + NAD(+). The catalysed reaction is N,N-dimethyl-1,4-phenylenediamine + anthranilate + 2 NAD(+) = 2-(4-dimethylaminophenyl)diazenylbenzoate + 2 NADH + 2 H(+). Functionally, quinone reductase that provides resistance to thiol-specific stress caused by electrophilic quinones. Also exhibits azoreductase activity. Catalyzes the reductive cleavage of the azo bond in aromatic azo compounds to the corresponding amines. This Bordetella petrii (strain ATCC BAA-461 / DSM 12804 / CCUG 43448) protein is FMN-dependent NADH:quinone oxidoreductase.